The sequence spans 161 residues: Nucleoside diphosphate kinase (161 aa).

Positions 13, 61, 89, 95, 106, and 116 each coordinate ATP. The active-site Pros-phosphohistidine intermediate is the His119.

It belongs to the NDK family. It depends on Mg(2+) as a cofactor.

It is found in the cytoplasm. The enzyme catalyses a 2'-deoxyribonucleoside 5'-diphosphate + ATP = a 2'-deoxyribonucleoside 5'-triphosphate + ADP. It carries out the reaction a ribonucleoside 5'-diphosphate + ATP = a ribonucleoside 5'-triphosphate + ADP. Major role in the synthesis of nucleoside triphosphates other than ATP. The ATP gamma phosphate is transferred to the NDP beta phosphate via a ping-pong mechanism, using a phosphorylated active-site intermediate. The sequence is that of Nucleoside diphosphate kinase from Halobacterium salinarum (strain ATCC 29341 / DSM 671 / R1).